We begin with the raw amino-acid sequence, 513 residues long: t-SNARE domain-containing protein 1 (513 aa).

Disordered regions lie at residues M1–R23 and E49–F128. Over residues A7–G19 the composition is skewed to gly residues. S378 carries the phosphoserine modification. One can recognise a t-SNARE coiled-coil homology domain in the interval L416–A478. The chain crosses the membrane as a helical span at residues C491 to V511.

It is found in the membrane. This chain is t-SNARE domain-containing protein 1 (TSNARE1), found in Homo sapiens (Human).